The sequence spans 204 residues: Somatotropin (204 aa).

The N-terminal stretch at M1–S17 is a signal peptide. Pyrrolidone carboxylic acid is present on Q18. H36 serves as a coordination point for Zn(2+). Cysteines 69 and 177 form a disulfide. E186 is a Zn(2+) binding site. C194 and C202 form a disulfide bridge.

The protein belongs to the somatotropin/prolactin family.

It is found in the secreted. Its function is as follows. Growth hormone plays an important role in growth control and is involved in the regulation of several anabolic processes. Implicated as an osmoregulatory substance important for seawater adaptation. The protein is Somatotropin (gh) of Lates calcarifer (Barramundi).